The following is a 243-amino-acid chain: Small ribosomal subunit protein eS4 (243 aa).

An S4 RNA-binding domain is found at 43–105; sequence IPLLYIVRDY…TGEHYRVLPN (63 aa).

This sequence belongs to the eukaryotic ribosomal protein eS4 family.

The chain is Small ribosomal subunit protein eS4 (rps4e) from Pyrococcus abyssi (strain GE5 / Orsay).